Here is a 338-residue protein sequence, read N- to C-terminus: Taste receptor type 2 member 39 (338 aa).

Residues 1-30 (MLGRCFPPDTKEKQQLRMTKLCDPAESELS) lie on the Extracellular side of the membrane. Residues 31-51 (PFLITLILAVLLAEYLIGIIA) form a helical membrane-spanning segment. The Cytoplasmic portion of the chain corresponds to 52–74 (NGFIMAIHAAEWVQNKAVSTSGR). Residues 75–95 (ILVFLSVSRIALQSLMMLEIT) form a helical membrane-spanning segment. Over 96–116 (ISSTSLSFYSEDAVYYAFKIS) the chain is Extracellular. Residues 117-137 (FIFLNFCSLWFAAWLSFFYFV) traverse the membrane as a helical segment. Residues 138 to 156 (KIANFSYPLFLKLRWRITG) lie on the Cytoplasmic side of the membrane. The helical transmembrane segment at 157-177 (LIPWLLWLSVFISFSHSMFCI) threads the bilayer. The Extracellular segment spans residues 178-205 (NIXTVYCNNSFPIHSSNSTKKTYLSEIN). N-linked (GlcNAc...) asparagine glycosylation is found at Asn-185 and Asn-194. Residues 206–226 (VVGLAFFFNLGIVTPLIMFIL) form a helical membrane-spanning segment. Topologically, residues 227–262 (TATLLILSLKRHTLHMGSNATGSNDPSMEAHMGAIK) are cytoplasmic. Residues 263-283 (ATSYFLILYIFNAVALFIYLS) form a helical membrane-spanning segment. Residues 284–291 (NMFDINSL) lie on the Extracellular side of the membrane. The helical transmembrane segment at 292–312 (WNNLCQIIMAAYPASHSILLI) threads the bilayer. The Cytoplasmic segment spans residues 313–338 (QDNPGLRRAWKRLQLRLHLYPKEWTL).

Belongs to the G-protein coupled receptor T2R family.

Its subcellular location is the membrane. Its function is as follows. Receptor that may play a role in the perception of bitterness and is gustducin-linked. May play a role in sensing the chemical composition of the gastrointestinal content. The activity of this receptor may stimulate alpha gustducin, mediate PLC-beta-2 activation and lead to the gating of TRPM5. This chain is Taste receptor type 2 member 39 (TAS2R39), found in Gorilla gorilla gorilla (Western lowland gorilla).